A 327-amino-acid chain; its full sequence is DNA-directed RNA polymerase subunit alpha (327 aa).

The interval 1-231 (MIYQMQMPAK…DHIMYFANFS (231 aa)) is alpha N-terminal domain (alpha-NTD). An alpha C-terminal domain (alpha-CTD) region spans residues 247–327 (DEFESMRKLL…GMDITRYQMK (81 aa)).

The protein belongs to the RNA polymerase alpha chain family. As to quaternary structure, homodimer. The RNAP catalytic core consists of 2 alpha, 1 beta, 1 beta' and 1 omega subunit. When a sigma factor is associated with the core the holoenzyme is formed, which can initiate transcription.

It carries out the reaction RNA(n) + a ribonucleoside 5'-triphosphate = RNA(n+1) + diphosphate. DNA-dependent RNA polymerase catalyzes the transcription of DNA into RNA using the four ribonucleoside triphosphates as substrates. In Chlorobium phaeobacteroides (strain DSM 266 / SMG 266 / 2430), this protein is DNA-directed RNA polymerase subunit alpha.